Consider the following 424-residue polypeptide: Dihydroorotase (424 aa).

The Zn(2+) site is built by histidine 60 and histidine 62. Residues 62 to 64 (HFR) and asparagine 94 each bind substrate. The Zn(2+) site is built by aspartate 151, histidine 178, and histidine 231. Residue asparagine 277 participates in substrate binding. Aspartate 304 serves as a coordination point for Zn(2+). Aspartate 304 is a catalytic residue. Residue histidine 308 coordinates substrate.

It belongs to the metallo-dependent hydrolases superfamily. DHOase family. Class I DHOase subfamily. Zn(2+) serves as cofactor.

It carries out the reaction (S)-dihydroorotate + H2O = N-carbamoyl-L-aspartate + H(+). The protein operates within pyrimidine metabolism; UMP biosynthesis via de novo pathway; (S)-dihydroorotate from bicarbonate: step 3/3. Its function is as follows. Catalyzes the reversible cyclization of carbamoyl aspartate to dihydroorotate. The polypeptide is Dihydroorotase (Clostridium acetobutylicum (strain ATCC 824 / DSM 792 / JCM 1419 / IAM 19013 / LMG 5710 / NBRC 13948 / NRRL B-527 / VKM B-1787 / 2291 / W)).